A 335-amino-acid chain; its full sequence is Glyceraldehyde-3-phosphate dehydrogenase (335 aa).

Residues 12 to 13 (RI), Asp-34, Arg-78, and Ser-120 contribute to the NAD(+) site. D-glyceraldehyde 3-phosphate-binding positions include 151 to 153 (SCT) and Thr-182. Cys-152 (nucleophile) is an active-site residue. Asn-183 contributes to the NAD(+) binding site. D-glyceraldehyde 3-phosphate contacts are provided by residues Arg-197, 210–211 (TG), and Arg-233. An NAD(+)-binding site is contributed by Asn-315.

The protein belongs to the glyceraldehyde-3-phosphate dehydrogenase family. As to quaternary structure, homotetramer.

The protein localises to the cytoplasm. It carries out the reaction D-glyceraldehyde 3-phosphate + phosphate + NAD(+) = (2R)-3-phospho-glyceroyl phosphate + NADH + H(+). It functions in the pathway carbohydrate degradation; glycolysis; pyruvate from D-glyceraldehyde 3-phosphate: step 1/5. Functionally, catalyzes the oxidative phosphorylation of glyceraldehyde 3-phosphate (G3P) to 1,3-bisphosphoglycerate (BPG) using the cofactor NAD. The first reaction step involves the formation of a hemiacetal intermediate between G3P and a cysteine residue, and this hemiacetal intermediate is then oxidized to a thioester, with concomitant reduction of NAD to NADH. The reduced NADH is then exchanged with the second NAD, and the thioester is attacked by a nucleophilic inorganic phosphate to produce BPG. The sequence is that of Glyceraldehyde-3-phosphate dehydrogenase (gap) from Geobacillus stearothermophilus (Bacillus stearothermophilus).